A 1347-amino-acid chain; its full sequence is Spermatogenesis-associated protein 31A3 (1347 aa).

Residues 23–43 (PWVLDIFLTLVFALGFFFLLL) form a helical membrane-spanning segment. 8 disordered regions span residues 55–87 (PSPS…GREC), 108–142 (HLDK…HEPM), 154–235 (SPDP…STLI), 373–397 (EQDT…GPQK), 627–658 (QDES…EAQK), 900–955 (RGIP…REAV), 1084–1161 (VHEE…PSVS), and 1313–1335 (KAVS…SHHH). A compositionally biased stretch (basic residues) spans 60–82 (GKRKCPVGRRRRPRGRMKNHSLR). A compositionally biased stretch (polar residues) spans 165–178 (LASTPSPGPMTTSV). Residues 198–211 (PEPPALFPHPPHTP) show a composition bias toward pro residues. Composition is skewed to polar residues over residues 627–651 (QDES…STGE) and 927–948 (LTYS…SSKA). 2 stretches are compositionally biased toward basic and acidic residues: residues 1108-1127 (HKSE…RLEG) and 1137-1146 (RKTEDTHQDE).

Belongs to the SPATA31 family.

It is found in the membrane. Functionally, may play a role in spermatogenesis. This is Spermatogenesis-associated protein 31A3 (SPATA31A3) from Homo sapiens (Human).